A 125-amino-acid chain; its full sequence is Secreted RxLR effector protein 22 (125 aa).

Residues 1–26 (MRLIYSALVTAAAMVAISNGSTPARG) form the signal peptide. The disordered stretch occupies residues 21–66 (STPARGNEVETRSLRGGNEVDSSMSDDGERAARGGGRVRSQASGVT). Positions 32–50 (RSLRGGNEVDSSMSDDGER) match the RxLR-dEER motif.

The protein belongs to the RxLR effector family.

It localises to the secreted. The protein resides in the host nucleus. In terms of biological role, effector that acts as a broad suppressor of cell death to interrupt plant immunity. Inhibits cell death induced by cell death-inducing proteins, including the PAMP elicitor INF1 from P.infestans. The sequence is that of Secreted RxLR effector protein 22 from Plasmopara viticola (Downy mildew of grapevine).